Consider the following 692-residue polypeptide: Elongation factor G (692 aa).

Residues 8-282 form the tr-type G domain; that stretch reads PNTRNIGIMA…NVVAYLPSPV (275 aa). Residues 17 to 24, 81 to 85, and 135 to 138 each bind GTP; these read AHIDAGKT, DTPGH, and NKMD.

This sequence belongs to the TRAFAC class translation factor GTPase superfamily. Classic translation factor GTPase family. EF-G/EF-2 subfamily.

It is found in the cytoplasm. Functionally, catalyzes the GTP-dependent ribosomal translocation step during translation elongation. During this step, the ribosome changes from the pre-translocational (PRE) to the post-translocational (POST) state as the newly formed A-site-bound peptidyl-tRNA and P-site-bound deacylated tRNA move to the P and E sites, respectively. Catalyzes the coordinated movement of the two tRNA molecules, the mRNA and conformational changes in the ribosome. The chain is Elongation factor G from Brevibacillus brevis (strain 47 / JCM 6285 / NBRC 100599).